The following is a 567-amino-acid chain: DNA ligase B (567 aa).

The active-site N6-AMP-lysine intermediate is K132.

Belongs to the NAD-dependent DNA ligase family. LigB subfamily.

It catalyses the reaction NAD(+) + (deoxyribonucleotide)n-3'-hydroxyl + 5'-phospho-(deoxyribonucleotide)m = (deoxyribonucleotide)n+m + AMP + beta-nicotinamide D-nucleotide.. Functionally, catalyzes the formation of phosphodiester linkages between 5'-phosphoryl and 3'-hydroxyl groups in double-stranded DNA using NAD as a coenzyme and as the energy source for the reaction. The chain is DNA ligase B from Yersinia pestis bv. Antiqua (strain Angola).